Consider the following 365-residue polypeptide: Histidinol-phosphate aminotransferase (365 aa).

K220 bears the N6-(pyridoxal phosphate)lysine mark.

The protein belongs to the class-II pyridoxal-phosphate-dependent aminotransferase family. Histidinol-phosphate aminotransferase subfamily. As to quaternary structure, homodimer. Requires pyridoxal 5'-phosphate as cofactor.

It carries out the reaction L-histidinol phosphate + 2-oxoglutarate = 3-(imidazol-4-yl)-2-oxopropyl phosphate + L-glutamate. It participates in amino-acid biosynthesis; L-histidine biosynthesis; L-histidine from 5-phospho-alpha-D-ribose 1-diphosphate: step 7/9. This chain is Histidinol-phosphate aminotransferase, found in Neisseria meningitidis serogroup B (strain ATCC BAA-335 / MC58).